The chain runs to 336 residues: Ketol-acid reductoisomerase (NADP(+)) (336 aa).

One can recognise a KARI N-terminal Rossmann domain in the interval 2-181 (AKVYYEKDVM…GATRAGVLET (180 aa)). NADP(+) is bound by residues 25–28 (YGSQ), Arg-48, Ser-52, and 82–85 (DELQ). His-107 is a catalytic residue. Residue Gly-133 coordinates NADP(+). Residues 182–327 (TFKEETETDL…RQLREMMPFV (146 aa)) enclose the KARI C-terminal knotted domain. Residues Asp-190, Glu-194, Glu-226, and Glu-230 each coordinate Mg(2+). Ser-251 lines the substrate pocket.

Belongs to the ketol-acid reductoisomerase family. The cofactor is Mg(2+).

The enzyme catalyses (2R)-2,3-dihydroxy-3-methylbutanoate + NADP(+) = (2S)-2-acetolactate + NADPH + H(+). It carries out the reaction (2R,3R)-2,3-dihydroxy-3-methylpentanoate + NADP(+) = (S)-2-ethyl-2-hydroxy-3-oxobutanoate + NADPH + H(+). The protein operates within amino-acid biosynthesis; L-isoleucine biosynthesis; L-isoleucine from 2-oxobutanoate: step 2/4. Its pathway is amino-acid biosynthesis; L-valine biosynthesis; L-valine from pyruvate: step 2/4. Its function is as follows. Involved in the biosynthesis of branched-chain amino acids (BCAA). Catalyzes an alkyl-migration followed by a ketol-acid reduction of (S)-2-acetolactate (S2AL) to yield (R)-2,3-dihydroxy-isovalerate. In the isomerase reaction, S2AL is rearranged via a Mg-dependent methyl migration to produce 3-hydroxy-3-methyl-2-ketobutyrate (HMKB). In the reductase reaction, this 2-ketoacid undergoes a metal-dependent reduction by NADPH to yield (R)-2,3-dihydroxy-isovalerate. This Bacillus cytotoxicus (strain DSM 22905 / CIP 110041 / 391-98 / NVH 391-98) protein is Ketol-acid reductoisomerase (NADP(+)).